Here is a 148-residue protein sequence, read N- to C-terminus: MAEPDFVITLIGSKLAVPGTEFIYRGPAGECEKCKLKNICLNLDKNKKYRIVGLRNGMELDCLVHDTGVKAVEVVACPIIAVMESRKAFNGSRMTYEAPECDESCLNFALCHPEGIATGEKYTICEVFSEEVGPCKKGLTLKKVELRP.

It belongs to the UPF0179 family.

The polypeptide is UPF0179 protein UNCMA_27840 (Methanocella arvoryzae (strain DSM 22066 / NBRC 105507 / MRE50)).